The sequence spans 517 residues: Crotonobetaine/carnitine--CoA ligase (517 aa).

Belongs to the ATP-dependent AMP-binding enzyme family.

It carries out the reaction 4-(trimethylamino)butanoate + ATP + CoA = 4-(trimethylamino)butanoyl-CoA + AMP + diphosphate. The enzyme catalyses crotonobetaine + ATP + CoA = crotonobetainyl-CoA + AMP + diphosphate. The catalysed reaction is (R)-carnitine + ATP + CoA = (R)-carnitinyl-CoA + AMP + diphosphate. The protein operates within amine and polyamine metabolism; carnitine metabolism. Catalyzes the transfer of CoA to carnitine, generating the initial carnitinyl-CoA needed for the CaiB reaction cycle. Also has activity toward crotonobetaine and gamma-butyrobetaine. In Escherichia coli O157:H7, this protein is Crotonobetaine/carnitine--CoA ligase.